The primary structure comprises 74 residues: MSAGTKASELRELGDEELLNKLREAKEELFNLRFQAATGQLENHGRLKSVRKDIARIYTLMRERELGIETVESA.

Belongs to the universal ribosomal protein uL29 family.

The sequence is that of Large ribosomal subunit protein uL29 from Streptomyces griseus subsp. griseus (strain JCM 4626 / CBS 651.72 / NBRC 13350 / KCC S-0626 / ISP 5235).